Here is a 25-residue protein sequence, read N- to C-terminus: Fibrinolytic enzyme large subunit (25 aa).

In terms of domain architecture, Peptidase S1 spans 1 to 25; sequence VIGGTNASPGEIPWQLSQQRQSGSW. The disordered stretch occupies residues 1 to 25; sequence VIGGTNASPGEIPWQLSQQRQSGSW. A compositionally biased stretch (polar residues) spans 15–25; it reads QLSQQRQSGSW.

Belongs to the peptidase S1 family. In terms of assembly, heterodimer of a large and a small subunit held together by hydrophobic interactions.

Cleaves the carboxyl side of basic amino acids, small neutral amino acids, and Met residue. It is also a plasminogen activator. The polypeptide is Fibrinolytic enzyme large subunit (Eisenia fetida (Red wiggler worm)).